Here is a 1872-residue protein sequence, read N- to C-terminus: Plexin-A3 (1872 aa).

The signal sequence occupies residues M1–G19. One can recognise a Sema domain in the interval S20–V489. Residues S20–P1220 are Extracellular-facing. The N-linked (GlcNAc...) asparagine glycan is linked to N60. 9 disulfide bridges follow: C78–C87, C113–C121, C267–C388, C283–C339, C357–C376, C492–C509, C498–C540, C501–C518, and C512–C524. An N-linked (GlcNAc...) asparagine glycan is attached at N549. C575 and C595 are oxidised to a cystine. IPT/TIG domains are found at residues P841–V934, P936–T1021, P1024–Y1123, and P1126–T1212. N1163 is a glycosylation site (N-linked (GlcNAc...) asparagine). Residues A1221–V1241 form a helical membrane-spanning segment. Residues L1240–Q1294 adopt a coiled-coil conformation. Topologically, residues A1242–S1872 are cytoplasmic. S1597 is subject to Phosphoserine.

This sequence belongs to the plexin family. In terms of tissue distribution, detected in embryonic hindbrain, spinal cord, dorsal root ganglion, trigeminal ganglion and superior cervical ganglion. In newborns, detected throughout all layers of the hippocampus.

The protein resides in the cell membrane. Its function is as follows. Coreceptor for SEMA3A and SEMA3F. Necessary for signaling by class 3 semaphorins and subsequent remodeling of the cytoskeleton. Plays a role in axon guidance in the developing nervous system. Regulates the migration of sympathetic neurons, but not of neural crest precursors. Required for normal dendrite spine morphology in pyramidal neurons. May play a role in regulating semaphorin-mediated programmed cell death in the developing nervous system. Class 3 semaphorins bind to a complex composed of a neuropilin and a plexin. The plexin modulates the affinity of the complex for specific semaphorins, and its cytoplasmic domain is required for the activation of down-stream signaling events in the cytoplasm. The sequence is that of Plexin-A3 (Plxna3) from Mus musculus (Mouse).